We begin with the raw amino-acid sequence, 402 residues long: UDP-N-acetylmuramoylalanine--D-glutamate ligase (402 aa).

97-103 (GTNGKTT) contacts ATP.

It belongs to the MurCDEF family.

It localises to the cytoplasm. It catalyses the reaction UDP-N-acetyl-alpha-D-muramoyl-L-alanine + D-glutamate + ATP = UDP-N-acetyl-alpha-D-muramoyl-L-alanyl-D-glutamate + ADP + phosphate + H(+). Its pathway is cell wall biogenesis; peptidoglycan biosynthesis. Its function is as follows. Cell wall formation. Catalyzes the addition of glutamate to the nucleotide precursor UDP-N-acetylmuramoyl-L-alanine (UMA). The chain is UDP-N-acetylmuramoylalanine--D-glutamate ligase from Campylobacter jejuni subsp. jejuni serotype O:23/36 (strain 81-176).